The chain runs to 486 residues: Probable glycine dehydrogenase (decarboxylating) subunit 2 (486 aa).

Lysine 269 bears the N6-(pyridoxal phosphate)lysine mark.

This sequence belongs to the GcvP family. C-terminal subunit subfamily. As to quaternary structure, the glycine cleavage system is composed of four proteins: P, T, L and H. In this organism, the P 'protein' is a heterodimer of two subunits. It depends on pyridoxal 5'-phosphate as a cofactor.

The catalysed reaction is N(6)-[(R)-lipoyl]-L-lysyl-[glycine-cleavage complex H protein] + glycine + H(+) = N(6)-[(R)-S(8)-aminomethyldihydrolipoyl]-L-lysyl-[glycine-cleavage complex H protein] + CO2. In terms of biological role, the glycine cleavage system catalyzes the degradation of glycine. The P protein binds the alpha-amino group of glycine through its pyridoxal phosphate cofactor; CO(2) is released and the remaining methylamine moiety is then transferred to the lipoamide cofactor of the H protein. In Chlorobium phaeobacteroides (strain DSM 266 / SMG 266 / 2430), this protein is Probable glycine dehydrogenase (decarboxylating) subunit 2.